The chain runs to 206 residues: Ribosomal RNA small subunit methyltransferase G (206 aa).

Residues Gly74, Leu79, 125–126 (VE), and Arg140 each bind S-adenosyl-L-methionine.

The protein belongs to the methyltransferase superfamily. RNA methyltransferase RsmG family.

It localises to the cytoplasm. It catalyses the reaction guanosine(527) in 16S rRNA + S-adenosyl-L-methionine = N(7)-methylguanosine(527) in 16S rRNA + S-adenosyl-L-homocysteine. Specifically methylates the N7 position of guanine in position 527 of 16S rRNA. The chain is Ribosomal RNA small subunit methyltransferase G from Shewanella putrefaciens (strain CN-32 / ATCC BAA-453).